Consider the following 240-residue polypeptide: Large ribosomal subunit protein uL1 (240 aa).

This sequence belongs to the universal ribosomal protein uL1 family. Part of the 50S ribosomal subunit.

Binds directly to 23S rRNA. The L1 stalk is quite mobile in the ribosome, and is involved in E site tRNA release. Functionally, protein L1 is also a translational repressor protein, it controls the translation of the L11 operon by binding to its mRNA. This is Large ribosomal subunit protein uL1 from Nocardioides sp. (strain ATCC BAA-499 / JS614).